The primary structure comprises 956 residues: Glycine dehydrogenase (decarboxylating) 2 (956 aa).

Position 706 is an N6-(pyridoxal phosphate)lysine (Lys706).

Belongs to the GcvP family. In terms of assembly, the glycine cleavage system is composed of four proteins: P, T, L and H. Pyridoxal 5'-phosphate is required as a cofactor.

The enzyme catalyses N(6)-[(R)-lipoyl]-L-lysyl-[glycine-cleavage complex H protein] + glycine + H(+) = N(6)-[(R)-S(8)-aminomethyldihydrolipoyl]-L-lysyl-[glycine-cleavage complex H protein] + CO2. Its function is as follows. The glycine cleavage system catalyzes the degradation of glycine. The P protein binds the alpha-amino group of glycine through its pyridoxal phosphate cofactor; CO(2) is released and the remaining methylamine moiety is then transferred to the lipoamide cofactor of the H protein. The polypeptide is Glycine dehydrogenase (decarboxylating) 2 (Colwellia psychrerythraea (strain 34H / ATCC BAA-681) (Vibrio psychroerythus)).